The sequence spans 536 residues: Probable 1,4-beta-D-glucan cellobiohydrolase B (536 aa).

The N-terminal stretch at 1 to 21 (MSSFQVYRAALLLSILATANA) is a signal peptide. The tract at residues 22 to 458 (QQVGTYTTET…SNIKFGPIGS (437 aa)) is catalytic. E233 functions as the Nucleophile in the catalytic mechanism. The active-site Proton donor is the E238. N-linked (GlcNAc...) asparagine glycans are attached at residues N351 and N414. The segment at 459–500 (TYSSGSSSGSGSSSSSSSTTTKATSTTLKTTSTTSSGSSSTS) is ser/Thr-rich linker. The tract at residues 464 to 499 (SSSGSGSSSSSSSTTTKATSTTLKTTSTTSSGSSST) is disordered. The region spanning 500–536 (SAAQAYGQCGGQGWTGPTTCVSGYTCTYENAYYSQCL) is the CBM1 domain. Intrachain disulfides connect C508–C525 and C519–C535.

Belongs to the glycosyl hydrolase 7 (cellulase C) family.

It localises to the secreted. The enzyme catalyses Hydrolysis of (1-&gt;4)-beta-D-glucosidic linkages in cellulose and cellotetraose, releasing cellobiose from the non-reducing ends of the chains.. Its function is as follows. The biological conversion of cellulose to glucose generally requires three types of hydrolytic enzymes: (1) Endoglucanases which cut internal beta-1,4-glucosidic bonds; (2) Exocellobiohydrolases that cut the disaccharide cellobiose from the non-reducing end of the cellulose polymer chain; (3) Beta-1,4-glucosidases which hydrolyze the cellobiose and other short cello-oligosaccharides to glucose. In Aspergillus niger (strain ATCC MYA-4892 / CBS 513.88 / FGSC A1513), this protein is Probable 1,4-beta-D-glucan cellobiohydrolase B (cbhB).